The sequence spans 291 residues: Mitochondrial thiamine pyrophosphate carrier 1 (291 aa).

Transmembrane regions (helical) follow at residues 12–31 (GATASVYHTLVAGSVSGAVA), 83–99 (IMYILYGATQFTSYSMF), 120–141 (SLIVGTSAGLTSLIVTYPFDLL), 167–191 (GGLAGLYMGAKPTLLSLGLNSGLMF), 214–230 (FCGFFAGASSKGITFPL), and 265–282 (GFGISLIKTAPTSAVSLF). Solcar repeat units lie at residues 15 to 102 (ASVY…FSKA), 115 to 200 (RPSN…AREV), and 207 to 290 (NIPF…VLNG).

Belongs to the mitochondrial carrier (TC 2.A.29) family.

It is found in the mitochondrion inner membrane. Mitochondrial transporter that mediates uptake of thiamine pyrophosphate (ThPP) into mitochondria. The polypeptide is Mitochondrial thiamine pyrophosphate carrier 1 (TPC1) (Meyerozyma guilliermondii (strain ATCC 6260 / CBS 566 / DSM 6381 / JCM 1539 / NBRC 10279 / NRRL Y-324) (Yeast)).